We begin with the raw amino-acid sequence, 357 residues long: O-methyltransferase 9 (357 aa).

Residues G200, D224, N249, F250, and K263 each contribute to the S-adenosyl-L-methionine site. Catalysis depends on H267, which acts as the Proton acceptor.

This sequence belongs to the class I-like SAM-binding methyltransferase superfamily. Cation-independent O-methyltransferase family. COMT subfamily.

It carries out the reaction (3,5-dichloro-2,4,6-trihydroxyphenyl)hexan-1-one + S-adenosyl-L-methionine = 1-(3,5-dichloro-2,6-dihydroxy-4-methoxyphenyl)hexan-1-one + S-adenosyl-L-homocysteine + H(+). The sequence is that of O-methyltransferase 9 (omt9) from Dictyostelium discoideum (Social amoeba).